Here is an 86-residue protein sequence, read N- to C-terminus: Small ribosomal subunit protein uS17 (86 aa).

This sequence belongs to the universal ribosomal protein uS17 family. In terms of assembly, part of the 30S ribosomal subunit.

Functionally, one of the primary rRNA binding proteins, it binds specifically to the 5'-end of 16S ribosomal RNA. The chain is Small ribosomal subunit protein uS17 from Chlamydia pneumoniae (Chlamydophila pneumoniae).